A 474-amino-acid polypeptide reads, in one-letter code: PRAME family member 1 (474 aa).

An LRR 1; degenerate repeat occupies Arg97–Cys124. The stretch at His179–Tyr203 is one LRR 2; degenerate repeat. One copy of the LRR 3; degenerate repeat lies at Leu204–Glu230. Residues Met231–Arg265 form an LRR 4; degenerate repeat. LRR repeat units lie at residues Leu266–Leu291, Gln292–Lys323, His324–Ala342, Ala348–Arg375, and Cys376–His400.

It belongs to the PRAME family.

This is PRAME family member 1 from Homo sapiens (Human).